Here is a 247-residue protein sequence, read N- to C-terminus: ATP synthase subunit a, chloroplastic (247 aa).

5 consecutive transmembrane segments (helical) span residues 38 to 58, 95 to 115, 134 to 154, 199 to 219, and 220 to 240; these read QVLI…ALAV, VPFI…GALL, INTT…AGLT, LVVV…VMFL, and GLFT…AYIG.

It belongs to the ATPase A chain family. As to quaternary structure, F-type ATPases have 2 components, CF(1) - the catalytic core - and CF(0) - the membrane proton channel. CF(1) has five subunits: alpha(3), beta(3), gamma(1), delta(1), epsilon(1). CF(0) has four main subunits: a, b, b' and c.

The protein resides in the plastid. It localises to the chloroplast thylakoid membrane. Its function is as follows. Key component of the proton channel; it plays a direct role in the translocation of protons across the membrane. The chain is ATP synthase subunit a, chloroplastic from Helianthus annuus (Common sunflower).